The following is a 307-amino-acid chain: 4-hydroxythreonine-4-phosphate dehydrogenase (307 aa).

Substrate-binding residues include His-126 and Thr-127. A divalent metal cation contacts are provided by His-156, His-195, and His-251. Substrate contacts are provided by Lys-259, Asn-268, and Arg-277.

The protein belongs to the PdxA family. In terms of assembly, homodimer. It depends on Zn(2+) as a cofactor. Mg(2+) is required as a cofactor. Co(2+) serves as cofactor.

The protein resides in the cytoplasm. It carries out the reaction 4-(phosphooxy)-L-threonine + NAD(+) = 3-amino-2-oxopropyl phosphate + CO2 + NADH. It functions in the pathway cofactor biosynthesis; pyridoxine 5'-phosphate biosynthesis; pyridoxine 5'-phosphate from D-erythrose 4-phosphate: step 4/5. Functionally, catalyzes the NAD(P)-dependent oxidation of 4-(phosphooxy)-L-threonine (HTP) into 2-amino-3-oxo-4-(phosphooxy)butyric acid which spontaneously decarboxylates to form 3-amino-2-oxopropyl phosphate (AHAP). The sequence is that of 4-hydroxythreonine-4-phosphate dehydrogenase from Helicobacter pylori (strain HPAG1).